We begin with the raw amino-acid sequence, 643 residues long: MKSTKMTTAQALVKFLDNQYVSFDGKEEKFVHGIFTIFGHGIVVGLGQALDENPRGLKVYQGRNEQGMAHAATAFAKQNNRRKIIACSSSIGPGAANMVTAAATATVNNIPLLLLPGDSFATRQPDPVLQQIEQSYNLGITTNDVFKPVCKYWDRVNRPEQLMSAMINAMRVLTDPAETGAVCIALPQDVQGESFEFPEYFFKKRVHKITRPLAVEEEFYECLNIIKNKKKPIIICGGGVRYSEAGDTLSKFANRFNIPIGETQAGKSSIKSSDLMNLGGIGVTGNLAANIIAKDADLVIGVGTRFSDFTTASKSLFENPDVEFVTINLSKFHASKLDSCKMVGDVKECLEYLYKLLEKENYISSYKDEIKDAKMAWKEEMKKLTNIKYEENFDPIIKFRNKESLEEFKKLTDTTITQTSALGLIRECIDNDAIIVGASGSLPGDLQRMWETESLNSYHMEYGYSCMGYEIAAGFGAKLAEPEKEVYSILGDGSYLMLHSELITSIQENKKVNVLLFDNCGFGCINNLQMSNGIGNLATEFRYRNDETNKLNGKLIPIDFAKAAAGYGLKTYTAKNLEELKNALIDAKKQRVSTLIDIKVLPKTMTDGYESWWHVGLAEVSEKESVNKAFENNKKVLKSARKY.

Glutamate 65 lines the thiamine diphosphate pocket. The segment at 441–521 (SLPGDLQRMW…VNVLLFDNCG (81 aa)) is thiamine pyrophosphate binding. Mg(2+)-binding residues include aspartate 492 and asparagine 519.

This sequence belongs to the TPP enzyme family. Mg(2+) serves as cofactor. The cofactor is thiamine diphosphate.

It carries out the reaction 3D-3,5/4-trihydroxycyclohexane-1,2-dione + H2O = 5-deoxy-D-glucuronate + H(+). It functions in the pathway polyol metabolism; myo-inositol degradation into acetyl-CoA; acetyl-CoA from myo-inositol: step 3/7. Involved in the cleavage of the C1-C2 bond of 3D-(3,5/4)-trihydroxycyclohexane-1,2-dione (THcHDO) to yield 5-deoxy-glucuronate (5DG). This Clostridium botulinum (strain Eklund 17B / Type B) protein is 3D-(3,5/4)-trihydroxycyclohexane-1,2-dione hydrolase.